The chain runs to 407 residues: Protein phosphatase methylesterase 1 (407 aa).

The disordered stretch occupies residues 1-53; it reads MSDLQKSFAKSKLAKLPPEPPPIPESVADEDDDSGSSTETVTPSPVKQLFARP. Residues Ser-185, Asp-211, and His-342 contribute to the active site. The segment covering 388 to 401 has biased composition (gly residues); sequence GAGVPLGKAEGGTT. Positions 388–407 are disordered; sequence GAGVPLGKAEGGTTGSFKRS.

It belongs to the AB hydrolase superfamily.

The enzyme catalyses [phosphatase 2A protein]-C-terminal L-leucine methyl ester + H2O = [phosphatase 2A protein]-C-terminal L-leucine + methanol + H(+). Functionally, demethylates proteins that have been reversibly carboxymethylated. Demethylates the phosphatase PP2A catalytic subunit. The protein is Protein phosphatase methylesterase 1 (ppe1) of Emericella nidulans (strain FGSC A4 / ATCC 38163 / CBS 112.46 / NRRL 194 / M139) (Aspergillus nidulans).